The chain runs to 245 residues: MDKISIRCFIFLVLTSFVTTVSCLSAATDYREVEDEHEFSYEWNQENGPAKWGKLRPEWKMCGKGEMQSPIDLMNKRVRLVTHLKKLTRHYKPCNATLKNRGHDMMLKFGEEGSGSITVNGTEYKLLQLHWHSPSEHTMNGRRFALELHMVHENINGSLAVVTVLYKIGRPDSFLGLLENKLSAITDQNEAEKYVDVIDPRDIKIGSRKFYRYIGSLTTPPCTQNVIWTVVKKVNTHRYFLLFFT.

The first 23 residues, 1–23 (MDKISIRCFIFLVLTSFVTTVSC), serve as a signal peptide directing secretion. Residues 37–245 (HEFSYEWNQE…THRYFLLFFT (209 aa)) enclose the Alpha-carbonic anhydrase domain. Cys-62 and Cys-222 are oxidised to a cystine. A glycan (N-linked (GlcNAc...) asparagine) is linked at Asn-95. Catalysis depends on His-103, which acts as the Proton acceptor. N-linked (GlcNAc...) asparagine glycosylation is present at Asn-120. Residues His-130, His-132, and His-149 each coordinate Zn(2+). A glycan (N-linked (GlcNAc...) asparagine) is linked at Asn-156. 218–219 (TT) provides a ligand contact to substrate.

This sequence belongs to the alpha-class carbonic anhydrase family. The cofactor is Zn(2+). N-glycosylated. Expressed in stems and roots.

The protein resides in the plastid. It is found in the chloroplast stroma. The catalysed reaction is hydrogencarbonate + H(+) = CO2 + H2O. In terms of biological role, reversible hydration of carbon dioxide. The protein is Alpha carbonic anhydrase 2 (ACA2) of Arabidopsis thaliana (Mouse-ear cress).